A 555-amino-acid chain; its full sequence is Glutamine--tRNA ligase (555 aa).

Residues 34 to 44 (PEPNGYLHIGH) carry the 'HIGH' region motif. ATP is bound by residues 35–37 (EPN) and 41–47 (HIGHAKS). L-glutamine-binding residues include D67 and Y212. Residues T231, 261 to 262 (RL), and 269 to 271 (MSK) contribute to the ATP site. The short motif at 268 to 272 (VMSKR) is the 'KMSKS' region element. An interaction with tRNA region spans residues 317-324 (TKQDNTIE).

This sequence belongs to the class-I aminoacyl-tRNA synthetase family. Monomer.

It is found in the cytoplasm. It carries out the reaction tRNA(Gln) + L-glutamine + ATP = L-glutaminyl-tRNA(Gln) + AMP + diphosphate. The polypeptide is Glutamine--tRNA ligase (Salmonella paratyphi B (strain ATCC BAA-1250 / SPB7)).